The primary structure comprises 421 residues: FBD-associated F-box protein At5g56370 (421 aa).

The 52-residue stretch at 1–52 (MDSISLLPDDFLLRILSLLPTKDVLNTSVLSKRWRYLWKLVPKLQYSLIDKN) folds into the F-box domain. In terms of domain architecture, FBD spans 332–382 (HWEEPSSVPETLMFVLETLEWRNYRGLKMENELASFLLKHSRRLKIATFSP).

The protein is FBD-associated F-box protein At5g56370 of Arabidopsis thaliana (Mouse-ear cress).